The following is a 341-amino-acid chain: Killer cell immunoglobulin-like receptor 2DL3 (341 aa).

A signal peptide spans 1-21; the sequence is MSLMVVSMVCVGFFLLQGAWP. The Extracellular portion of the chain corresponds to 22–245; that stretch reads HEGVHRKPSL…SETGNPRHLH (224 aa). Ig-like C2-type domains are found at residues 42–107 and 142–205; these read EETV…VTHS and GESV…FRDS. 2 disulfide bridges follow: C49–C100 and C149–C198. N-linked (GlcNAc...) asparagine glycans are attached at residues N84, N178, and N211. The segment at 220–239 is disordered; it reads VTGNPSNSWPSPTEPSSETG. A compositionally biased stretch (low complexity) spans 223–239; sequence NPSNSWPSPTEPSSETG. The helical transmembrane segment at 246–265 threads the bilayer; the sequence is VLIGTSVVIILFILLLFFLL. Residues 266–341 lie on the Cytoplasmic side of the membrane; the sequence is HRWCCNKKNA…VYTELPNAEP (76 aa).

The protein belongs to the immunoglobulin superfamily. As to quaternary structure, interacts with ARRB2.

Its subcellular location is the cell membrane. Its function is as follows. Receptor on natural killer (NK) cells for HLA-C alleles (HLA-Cw1, HLA-Cw3 and HLA-Cw7). Inhibits the activity of NK cells thus preventing cell lysis. This is Killer cell immunoglobulin-like receptor 2DL3 from Homo sapiens (Human).